The following is a 291-amino-acid chain: Short-chain dehydrogenase/reductase GME11359 (291 aa).

6 residues coordinate NADP(+): L18, D67, N96, Y177, K181, and V209. Y177 acts as the Proton acceptor in catalysis. K181 acts as the Lowers pKa of active site Tyr in catalysis.

This sequence belongs to the short-chain dehydrogenases/reductases (SDR) family.

It participates in secondary metabolite biosynthesis. Short-chain dehydrogenase/reductase; part of the gene cluster that mediates the biosynthesis of dibenzodioxocinones such as pestalotiollide B, a novel class of inhibitors against cholesterol ester transfer protein (CEPT). The biosynthesis initiates from condensation of acetate and malonate units catalyzed by the non-reducing PKS pks8/GME11356. Pks8/GME11356 lacks a thioesterase (TE) domain, which is important to the cyclizing of the third ring of atrochrysone carboxylic acid, and the esterase GME11355 might play the role of TE and catalyzes the cyclization reaction of the C ring. The lactamase-like protein GME11357 (or other beta-lactamases in Pestalotiopsis microspora) probably hydrolyzes the thioester bond between the ACP of pks8/GME11356 and the intermediate to release atrochrysone carboxylic acid, which is spontaneously dehydrates to form endocrocin anthrone. Endocrocin anthrone is further converted to emodin via the endocrocin intermediate. Emodin is then oxidized by several enzymes such as the Baeyer-Villiger oxidase GME11358, the oxidoreductase GME11367, the short chain dehydrogenase/reductase GME11373, as well as by other oxidoreductases from the cluster, to modify the A and C rings and open the B ring, and finally yield monodictyphenone. The prenyltransferase GME11375 may catalyze the addition reaction between the C5 side chains and the carbon bone of dibenzodioxocinones. The remaining biochemical reactions to the final product dibenzodioxocinones should be methylation catalyzed by methyltransferase GME11366 and reduction and lactonization reaction catalyzed by a series of oxidordeuctases. The polypeptide is Short-chain dehydrogenase/reductase GME11359 (Pestalotiopsis microspora).